Reading from the N-terminus, the 251-residue chain is Adenosylcobinamide-GDP ribazoletransferase (251 aa).

Transmembrane regions (helical) follow at residues 44–64 (LVGL…LLAG), 114–134 (IGAF…VLAH), 143–163 (GALV…AACV), 177–197 (AGAT…TGVA), and 198–218 (LAGP…VVWL).

This sequence belongs to the CobS family. Mg(2+) is required as a cofactor.

The protein localises to the cell inner membrane. The enzyme catalyses alpha-ribazole + adenosylcob(III)inamide-GDP = adenosylcob(III)alamin + GMP + H(+). The catalysed reaction is alpha-ribazole 5'-phosphate + adenosylcob(III)inamide-GDP = adenosylcob(III)alamin 5'-phosphate + GMP + H(+). Its pathway is cofactor biosynthesis; adenosylcobalamin biosynthesis; adenosylcobalamin from cob(II)yrinate a,c-diamide: step 7/7. Functionally, joins adenosylcobinamide-GDP and alpha-ribazole to generate adenosylcobalamin (Ado-cobalamin). Also synthesizes adenosylcobalamin 5'-phosphate from adenosylcobinamide-GDP and alpha-ribazole 5'-phosphate. The polypeptide is Adenosylcobinamide-GDP ribazoletransferase (Nitratidesulfovibrio vulgaris (strain DSM 19637 / Miyazaki F) (Desulfovibrio vulgaris)).